Reading from the N-terminus, the 227-residue chain is MLKIRSLGHSTFFLDDGTHRLLIEPFLEGNPRCPVTLGEVQSWQPSAVLISHAHGDHWGNALDFGRAGVPIIATAEIAGYAGAHGANNAVGMNIGGTYRAEWGSVSLTPAWHSSSFPDGTYGGMPTGLVIEFGGQRLYFAGDTALFSDMRLIGDRELDLAFLPIGDHYTMGPEEAGRTLDLLRPRVAIPMHYATFPALTGDPAVFRTEGERRGVEVRVLDPGETTEL.

It belongs to the UPF0173 family.

This Deinococcus radiodurans (strain ATCC 13939 / DSM 20539 / JCM 16871 / CCUG 27074 / LMG 4051 / NBRC 15346 / NCIMB 9279 / VKM B-1422 / R1) protein is UPF0173 metal-dependent hydrolase DR_0006.